We begin with the raw amino-acid sequence, 126 residues long: Large ribosomal subunit protein bL12 (126 aa).

It belongs to the bacterial ribosomal protein bL12 family. In terms of assembly, homodimer. Part of the ribosomal stalk of the 50S ribosomal subunit. Forms a multimeric L10(L12)X complex, where L10 forms an elongated spine to which 2 to 4 L12 dimers bind in a sequential fashion. Binds GTP-bound translation factors.

Functionally, forms part of the ribosomal stalk which helps the ribosome interact with GTP-bound translation factors. Is thus essential for accurate translation. The chain is Large ribosomal subunit protein bL12 from Solibacter usitatus (strain Ellin6076).